The sequence spans 531 residues: T-complex protein 1 subunit zeta-2 (531 aa).

Belongs to the TCP-1 chaperonin family. Component of the chaperonin-containing T-complex (TRiC), a heterooligomeric complex of about 850 to 900 kDa that forms two stacked rings, 12 to 16 nm in diameter. In terms of tissue distribution, testis specific.

Its subcellular location is the cytoplasm. Functionally, component of the chaperonin-containing T-complex (TRiC), a molecular chaperone complex that assists the folding of proteins upon ATP hydrolysis. The polypeptide is T-complex protein 1 subunit zeta-2 (Cct6b) (Mus musculus (Mouse)).